A 355-amino-acid chain; its full sequence is Probable butyrate kinase (355 aa).

This sequence belongs to the acetokinase family.

The protein resides in the cytoplasm. The enzyme catalyses butanoate + ATP = butanoyl phosphate + ADP. This is Probable butyrate kinase from Clostridium botulinum (strain Eklund 17B / Type B).